Consider the following 542-residue polypeptide: Katanin p60 ATPase-containing subunit A-like 2 (542 aa).

Residues 25 to 57 (RRKNLLILIMHYLLQEGYMDSANSLEQETKISL) enclose the LisH domain. 2 disordered regions span residues 94-126 (LDHD…RIAQ) and 142-168 (HAHQ…ASEI). Residues 114–126 (GSNSTQGLPRIAQ) show a composition bias toward polar residues. An ATP-binding site is contributed by 298 to 305 (GPPGTGKT).

It belongs to the AAA ATPase family. Katanin p60 subunit A1 subfamily. A-like 2 sub-subfamily.

It localises to the cytoplasm. The protein localises to the cytoskeleton. Its subcellular location is the spindle. The protein resides in the spindle pole. The enzyme catalyses n ATP + n H2O + a microtubule = n ADP + n phosphate + (n+1) alpha/beta tubulin heterodimers.. Severs microtubules in vitro in an ATP-dependent manner. This activity may promote rapid reorganization of cellular microtubule arrays. The chain is Katanin p60 ATPase-containing subunit A-like 2 (katnal2) from Xenopus tropicalis (Western clawed frog).